Consider the following 129-residue polypeptide: Cytochrome c3 (129 aa).

An N-terminal signal peptide occupies residues Met1 to Ala22. Residues His44, His47, Cys52, Cys55, His56, His57, Cys68, Cys73, His74, His92, Cys101, Cys104, His105, Cys122, Cys127, and His128 each coordinate heme c.

Post-translationally, binds 4 heme c groups per subunit.

The protein resides in the periplasm. Its function is as follows. Participates in sulfate respiration coupled with phosphorylation by transferring electrons from the enzyme dehydrogenase to ferredoxin. The chain is Cytochrome c3 from Nitratidesulfovibrio vulgaris (strain ATCC 29579 / DSM 644 / CCUG 34227 / NCIMB 8303 / VKM B-1760 / Hildenborough) (Desulfovibrio vulgaris).